The sequence spans 270 residues: UPF0354 protein BcerKBAB4_4524 (270 aa).

The protein belongs to the UPF0354 family.

The protein is UPF0354 protein BcerKBAB4_4524 of Bacillus mycoides (strain KBAB4) (Bacillus weihenstephanensis).